A 145-amino-acid polypeptide reads, in one-letter code: Nicking endonuclease (145 aa).

The tract at residues asparagine 126 to leucine 145 is disordered.

Endonuclease responsible for the single-chain interruptions (nicks) located at specific positions in the minus strand of the viral genome. The polypeptide is Nicking endonuclease (Escherichia phage T5 (Enterobacteria phage T5)).